Reading from the N-terminus, the 31-residue chain is Cuticle protein 54 (31 aa).

2 consecutive repeat copies span residues 7-10 (AAPA) and 13-17 (AAPAI).

In terms of biological role, component of the cuticle of migratory locust which contains more than 100 different structural proteins. The polypeptide is Cuticle protein 54 (Locusta migratoria (Migratory locust)).